The sequence spans 110 residues: MQALAKHKFASGSAQKARLVADQIRGLPVDRALEILAYSPKKAAVLVKKVLESAIANAEHNEGADIDELRITTIFVDDGPTMKRIMPRAKGRADRILKRTSHITVMVSDS.

This sequence belongs to the universal ribosomal protein uL22 family. As to quaternary structure, part of the 50S ribosomal subunit.

This protein binds specifically to 23S rRNA; its binding is stimulated by other ribosomal proteins, e.g. L4, L17, and L20. It is important during the early stages of 50S assembly. It makes multiple contacts with different domains of the 23S rRNA in the assembled 50S subunit and ribosome. Functionally, the globular domain of the protein is located near the polypeptide exit tunnel on the outside of the subunit, while an extended beta-hairpin is found that lines the wall of the exit tunnel in the center of the 70S ribosome. The protein is Large ribosomal subunit protein uL22 of Pseudoalteromonas translucida (strain TAC 125).